We begin with the raw amino-acid sequence, 385 residues long: Glucose-fructose oxidoreductase domain-containing protein 2 (385 aa).

Residues 1–25 form the signal peptide; it reads MKMLPGVGVFGTGSSARVLVPLLRA.

This sequence belongs to the Gfo/Idh/MocA family.

Its subcellular location is the secreted. The protein localises to the extracellular space. The protein resides in the extracellular matrix. Promotes matrix assembly. This is Glucose-fructose oxidoreductase domain-containing protein 2 (GFOD2) from Homo sapiens (Human).